A 47-amino-acid chain; its full sequence is Bacteriocin curvaticin DN317 (47 aa).

It belongs to the bacteriocin class IIA/YGNGV family.

The protein localises to the secreted. Its function is as follows. Has bactericidal activity against various Gram-negative Campylobacter, and the Gram-positive L.monocytogenes and B.subtilis. In vitro, inhibits C.jejuni strain ATCC 33560 (MIC=27.3 ug/ml). The chain is Bacteriocin curvaticin DN317 from Latilactobacillus curvatus (Lactobacillus curvatus).